The primary structure comprises 154 residues: Large ribosomal subunit protein uL13 (154 aa).

This sequence belongs to the universal ribosomal protein uL13 family. Part of the 50S ribosomal subunit.

Functionally, this protein is one of the early assembly proteins of the 50S ribosomal subunit, although it is not seen to bind rRNA by itself. It is important during the early stages of 50S assembly. The protein is Large ribosomal subunit protein uL13 of Brucella canis (strain ATCC 23365 / NCTC 10854 / RM-666).